A 206-amino-acid polypeptide reads, in one-letter code: LexA repressor (206 aa).

The H-T-H motif DNA-binding region spans 28–48; sequence RAEIAKRLGFKSANAAEEHLK. Active-site for autocatalytic cleavage activity residues include serine 123 and lysine 160.

The protein belongs to the peptidase S24 family. Homodimer.

It catalyses the reaction Hydrolysis of Ala-|-Gly bond in repressor LexA.. Functionally, represses a number of genes involved in the response to DNA damage (SOS response), including recA and lexA. In the presence of single-stranded DNA, RecA interacts with LexA causing an autocatalytic cleavage which disrupts the DNA-binding part of LexA, leading to derepression of the SOS regulon and eventually DNA repair. The chain is LexA repressor from Shewanella sediminis (strain HAW-EB3).